The primary structure comprises 406 residues: MKIYLVGGAVRDRLLQRPAGDRDWVVVGATPAQMEAQGYSAVGRDFPVFLHPKTGEEYALARTERKSGRGYRGFVVDADPAVTLEEDLQRRDFTINAIACDEDTGTLVDPYGGVRDIEQRVLRHVGPAFVEDPLRVLRAARFMAHFAPLDFTVAPETMDLMRNVAASGELDALVPERVWQELRKALVSAQPSAFLRTLHDAHALGPILPELEALYGVPQRAEFHPEVDTGIHQEMVSDMAAKLAPGDDLVGFAALTHDLGKGLTPPEEWPRHIMHEQRGIKPLKELCARLRVPTEHQQLAEAVCREHLNVHRIDELRDATVLELLGRCDALRRPERVARIALCCEADKRGRLGFEDSDYPQGETLKRLHQAALSVQARDLDTTHLKGPAIGEALAKARVKAIAAAR.

ATP-binding residues include Gly-8 and Arg-11. Positions 8 and 11 each coordinate CTP. Positions 21 and 23 each coordinate Mg(2+). 3 residues coordinate ATP: Arg-91, Arg-138, and Arg-141. Positions 91, 138, and 141 each coordinate CTP. Residues 229–331 (TGIHQEMVSD…LELLGRCDAL (103 aa)) form the HD domain.

The protein belongs to the tRNA nucleotidyltransferase/poly(A) polymerase family. Bacterial CCA-adding enzyme type 1 subfamily. As to quaternary structure, monomer. Can also form homodimers and oligomers. Requires Mg(2+) as cofactor. It depends on Ni(2+) as a cofactor.

It catalyses the reaction a tRNA precursor + 2 CTP + ATP = a tRNA with a 3' CCA end + 3 diphosphate. It carries out the reaction a tRNA with a 3' CCA end + 2 CTP + ATP = a tRNA with a 3' CCACCA end + 3 diphosphate. Catalyzes the addition and repair of the essential 3'-terminal CCA sequence in tRNAs without using a nucleic acid template. Adds these three nucleotides in the order of C, C, and A to the tRNA nucleotide-73, using CTP and ATP as substrates and producing inorganic pyrophosphate. tRNA 3'-terminal CCA addition is required both for tRNA processing and repair. Also involved in tRNA surveillance by mediating tandem CCA addition to generate a CCACCA at the 3' terminus of unstable tRNAs. While stable tRNAs receive only 3'-terminal CCA, unstable tRNAs are marked with CCACCA and rapidly degraded. This is Multifunctional CCA protein from Stenotrophomonas maltophilia (strain R551-3).